The following is a 309-amino-acid chain: Short chain dehydrogenase MYCFIDRAFT_6125 (309 aa).

NADP(+)-binding residues include Ile-43, Arg-67, Asp-88, and Arg-150. Residue Ser-168 is the Proton donor of the active site. Tyr-182, Lys-186, Val-215, and Ser-217 together coordinate NADP(+). The active-site Proton acceptor is Tyr-182. Residue Lys-186 is the Lowers pKa of active site Tyr of the active site.

The protein belongs to the short-chain dehydrogenases/reductases (SDR) family.

It participates in secondary metabolite biosynthesis. Functionally, short chain dehydrogenase; part of the gene cluster that mediates the biosynthesis of an emodin derivative that may be involved in black Sigatoka disease of banana. The pathway begins with the synthesis of atrochrysone thioester by the polyketide synthase PKS8-1. The atrochrysone carboxyl ACP thioesterase MYCFIDRAFT_190111 then breaks the thioester bond and releases the atrochrysone carboxylic acid from PKS8-1. The decarboxylase MYCFIDRAFT_34057 then catalyzes the concerted decarboxylation-elimination required to convert atochrysone carboxylic acid into emodin anthrone, which is further oxidized to emodin by the anthrone oxygenase MYCFIDRAFT_34418. The functions of the other tailoring enzymes as well as the final product of the cluster have still to be identified. The sequence is that of Short chain dehydrogenase MYCFIDRAFT_6125 from Pseudocercospora fijiensis (strain CIRAD86) (Black leaf streak disease fungus).